A 356-amino-acid polypeptide reads, in one-letter code: Phenylalanine dehydrogenase (356 aa).

Residue arginine 43 coordinates NAD(+). An L-phenylalanine-binding site is contributed by lysine 67. Lysine 79 functions as the Proton donor/acceptor in the catalytic mechanism. An L-phenylalanine-binding site is contributed by 118–119; sequence PD. Residues aspartate 119, serine 150, threonine 154, 183–189, 206–207, arginine 211, 240–241, and 261–263 contribute to the NAD(+) site; these read GLGAVGG, DT, AM, and AAN. An L-phenylalanine-binding site is contributed by asparagine 263.

It belongs to the Glu/Leu/Phe/Val dehydrogenases family. As to quaternary structure, homotetramer, dimer of dimers.

The enzyme catalyses L-phenylalanine + NAD(+) + H2O = 3-phenylpyruvate + NH4(+) + NADH + H(+). It participates in amino-acid biosynthesis; L-phenylalanine biosynthesis; L-phenylalanine from phenylpyruvate (PDH route): step 1/1. With respect to regulation, subject to competitive inhibition by 3-phenylpropionate for the conversion of L-phenylalanine to phenylpyruvate. Subject to competitive inhibition by D-phenylalanine for the conversion of phenylpyruvate to L-phenylalanine. In terms of biological role, catalyzes the reversible NAD(+)-dependent oxidative deamination of L-phenylalanine to phenylpyruvate. The protein is Phenylalanine dehydrogenase of Rhodococcus sp.